The sequence spans 364 residues: MRLLGIETSCDETAAAVIEYNNESSSRILSNIVWSQIDHHAPYGGVVPEIAARAHVEILDHLILQALTEANTKLKDIDGIAATSGPGLIGGLLVGVMSAKALSLATGKPFIAVNHLEGHALTAVLTHNVKFPYLLLLVSGGHTQTILVHGVGNYQRLGTTIDDALGEAFDKTAKLLGLPYPGGPALEKAALLGDKNRIPLPRPLKGEKRLDFSFSGLKTAVRQAATAIAPLTENDVADIAASFQAAVTDTVRDRVHLALQHFTHQYPLSHDQEKHSPALVVAGGVAANQALRSTLQELAHQHGFEFIAPPLSLCTDNAAMIAFAGAQKLAQGETSSLDIAPRSRWPLDEKAIPLIGMGRRGTKA.

Fe cation is bound by residues His-115 and His-119. Substrate-binding positions include 137 to 141 (LVSGG), Asp-170, Gly-183, and Asn-288. Asp-316 is a Fe cation binding site.

Belongs to the KAE1 / TsaD family. The cofactor is Fe(2+).

It localises to the cytoplasm. The enzyme catalyses L-threonylcarbamoyladenylate + adenosine(37) in tRNA = N(6)-L-threonylcarbamoyladenosine(37) in tRNA + AMP + H(+). Functionally, required for the formation of a threonylcarbamoyl group on adenosine at position 37 (t(6)A37) in tRNAs that read codons beginning with adenine. Is involved in the transfer of the threonylcarbamoyl moiety of threonylcarbamoyl-AMP (TC-AMP) to the N6 group of A37, together with TsaE and TsaB. TsaD likely plays a direct catalytic role in this reaction. The polypeptide is tRNA N6-adenosine threonylcarbamoyltransferase (Bartonella tribocorum (strain CIP 105476 / IBS 506)).